A 135-amino-acid chain; its full sequence is Serine protease inhibitor swm-1 (135 aa).

The signal sequence occupies residues 1-16 (MRILVIITCIVAVATA). 10 disulfide bridges follow: Cys20/Cys53, Cys29/Cys48, Cys33/Cys44, Cys37/Cys73, Cys55/Cys67, Cys80/Cys114, Cys89/Cys109, Cys93/Cys105, Cys97/Cys133, and Cys116/Cys127. 2 TIL domains span residues 20-73 (CEAN…VSEC) and 80-133 (CPEN…KKDC). Asn83 is a glycosylation site (N-linked (GlcNAc...) asparagine).

In terms of tissue distribution, in male, expressed in the vas deferens cuboidal cells and, in posterior body wall and male-specific diagonal muscles. In hermaphrodites, expressed in posterior body wall muscles and spermatheca.

It localises to the secreted. The protein localises to the cytoplasmic vesicle. The protein resides in the secretory vesicle lumen. Its function is as follows. Serine protease inhibitor. Probably by inhibiting serine protease tyr-5 in males, prevents the maturation of spermatids into mature motile spermatozoa until their transfer into a hermaphrodite. Also required for efficient sperm transfer and thus for male fertility. This is Serine protease inhibitor swm-1 from Caenorhabditis elegans.